Here is a 435-residue protein sequence, read N- to C-terminus: MLDSKLLRTELDETAAKLARRGFKLDVETIRKLEEQRKSIQVEVENLQSTRNSISKQIGQKMAAGDKEGAEEIKKQIGTLGSDLDAKKVELEQVMAQLDEFTLSVPNIPDDEVPDGKDENDNVEISRWGEPKTYDFELKDHVDLGEMGGGLDFASAVKITGARFIVMKGQFARLHRAIAQFMLDLHTEEHGYTEMYVPYLVNSDSLFGTGQLPKFGKDLFHTEPLVEKVNDEEPRKLSLIPTAEVPVTNLVRDTISDEADLPIKMTAHTPCFRSEAGSYGRDTRGLIRMHQFDKVELVQITKPEDSMNALEELTGHAEKVLQLLELPYRKVVLCTGDMGFGARKTYDLEVWVPAQETYREISSCSNMWDFQARRMQARFRRKGEKKPELVHTLNGSGLAVGRTMVAILENNQEADGRIAIPTVLQKYMAGATHIG.

242-244 (TAE) contacts L-serine. Residue 273–275 (RSE) coordinates ATP. Glu-296 is an L-serine binding site. 360-363 (EISS) is a binding site for ATP. Residue Ser-396 participates in L-serine binding.

Belongs to the class-II aminoacyl-tRNA synthetase family. Type-1 seryl-tRNA synthetase subfamily. As to quaternary structure, homodimer. The tRNA molecule binds across the dimer.

Its subcellular location is the cytoplasm. The catalysed reaction is tRNA(Ser) + L-serine + ATP = L-seryl-tRNA(Ser) + AMP + diphosphate + H(+). The enzyme catalyses tRNA(Sec) + L-serine + ATP = L-seryl-tRNA(Sec) + AMP + diphosphate + H(+). It participates in aminoacyl-tRNA biosynthesis; selenocysteinyl-tRNA(Sec) biosynthesis; L-seryl-tRNA(Sec) from L-serine and tRNA(Sec): step 1/1. Its function is as follows. Catalyzes the attachment of serine to tRNA(Ser). Is also able to aminoacylate tRNA(Sec) with serine, to form the misacylated tRNA L-seryl-tRNA(Sec), which will be further converted into selenocysteinyl-tRNA(Sec). The polypeptide is Serine--tRNA ligase (Vibrio campbellii (strain ATCC BAA-1116)).